Here is an 83-residue protein sequence, read N- to C-terminus: Large ribosomal subunit protein bL28 (83 aa).

Belongs to the bacterial ribosomal protein bL28 family.

This Amoebophilus asiaticus (strain 5a2) protein is Large ribosomal subunit protein bL28.